A 162-amino-acid polypeptide reads, in one-letter code: Beta-carotene hydroxylase (162 aa).

One can recognise a Fatty acid hydroxylase domain in the interval 8-135 (VATVLVMELT…GRDHCVSFGF (128 aa)).

It belongs to the sterol desaturase family.

It carries out the reaction all-trans-beta-carotene + 4 reduced [2Fe-2S]-[ferredoxin] + 2 O2 + 4 H(+) = all-trans-zeaxanthin + 4 oxidized [2Fe-2S]-[ferredoxin] + 2 H2O. Its pathway is carotenoid biosynthesis; astaxanthin biosynthesis. Functionally, catalyzes the hydroxylation reaction from beta-carotene to zeaxanthin via beta-cryptoxanthin. The chain is Beta-carotene hydroxylase (crtZ) from Paracoccus sp. (strain PC1) (Alcaligenes sp. (strain PC1)).